The primary structure comprises 294 residues: Small ribosomal subunit biogenesis GTPase RsgA (294 aa).

A CP-type G domain is found at 63-223 (KNELLRPPIA…VADTPGFSSL (161 aa)). GTP contacts are provided by residues 112 to 115 (SKID) and 166 to 174 (GQSGVGKSS). Zn(2+)-binding residues include Cys-247, Cys-252, His-254, and Cys-260.

This sequence belongs to the TRAFAC class YlqF/YawG GTPase family. RsgA subfamily. As to quaternary structure, monomer. Associates with 30S ribosomal subunit, binds 16S rRNA. Zn(2+) is required as a cofactor.

The protein localises to the cytoplasm. Functionally, one of several proteins that assist in the late maturation steps of the functional core of the 30S ribosomal subunit. Helps release RbfA from mature subunits. May play a role in the assembly of ribosomal proteins into the subunit. Circularly permuted GTPase that catalyzes slow GTP hydrolysis, GTPase activity is stimulated by the 30S ribosomal subunit. The sequence is that of Small ribosomal subunit biogenesis GTPase RsgA from Halalkalibacterium halodurans (strain ATCC BAA-125 / DSM 18197 / FERM 7344 / JCM 9153 / C-125) (Bacillus halodurans).